We begin with the raw amino-acid sequence, 833 residues long: MEIHSVGPFIIGKTLGQGTTGKVKLGFHKDTGFKVGIKIINKELLINKPSMRRKIEREIVLMKLIDHPNAMKMYEVYETSKYLFLILEYVEGGELFDYLVEKGGLESGEALFFFQQIIIGLEYCHSRNICHRDLKPENLLLSGDKRIKIADFGMGSIVRKDMLLHTSCGSPHYASPEVVSGIDYDGQKADVWSCGVILYALLTGKLPFDDENIRRLLNKVKNGAFSMPPYIHKDAQDLLTKMLTVDPSKRISIKEIKEHPWFVSNFNQFQKATPVEEINAEPLVDYSQIDEDIFRSLMALGVGTIDEVKQQLVSNQKSATLIYYRLLEERKKFDSDVNKYGYKPKETRRNSLSDMSLKKIFSGSNNNNNNNNNNNNNNNNNNNNNNNNNNNNNNNNNININNNNNNNNNNNNNNNNNNNNNNNNNNNNNNNNSAVGKSNDSSSQQPPHIQQPHSQQIPSNSTSQESMQISPSNSANNMAIQQPIINNNNNNNNNNNNINNNINNNINNNINNNSNNVNRPTSEGLLKQALQQHHQQQQQQFNGNNNNNTMNVQPLTMSASSSSSSSSTTPSLSPNSSTTSSTSTSPQLSAIKPDHYQRRGSMTASTNPATSPTMSHRGKTSSPIEITSKVRKLKISESQSNTPNSPIIGSSPKKSWFSYFFSKNSSSNNLNAANGSAPSSPSLQSNGVGQLQTTQANYVIESKIDVNLIYVNLEKIIKKYGFELKYQQQQQQQNIKHCIVRSHHINSDGTPQFECEIEIKPSTFINPVSPSKQHHHHHHQQQQPQQQQMPPLNLNGGQNINHDQGFRVSIIHKSGSQHKFNNFTSSLEQILTI.

The region spanning 9 to 262 is the Protein kinase domain; it reads FIIGKTLGQG…IKEIKEHPWF (254 aa). ATP-binding positions include 15-23 and Lys38; that span reads LGQGTTGKV. The Proton acceptor role is filled by Asp133. Residues 288-329 form the UBA domain; the sequence is QIDEDIFRSLMALGVGTIDEVKQQLVSNQKSATLIYYRLLEE. A compositionally biased stretch (basic and acidic residues) spans 338–351; sequence NKYGYKPKETRRNS. 3 disordered regions span residues 338–472, 528–626, and 764–799; these read NKYG…ISPS, QALQ…PIEI, and FINP…GGQN. Low complexity-rich tracts occupy residues 365–432 and 441–459; these read NNNN…NNNN and SSSQ…QIPS. Over residues 460-472 the composition is skewed to polar residues; it reads NSTSQESMQISPS. Residues 528-589 are compositionally biased toward low complexity; it reads QALQQHHQQQ…SSTSTSPQLS (62 aa). Polar residues predominate over residues 600-625; the sequence is GSMTASTNPATSPTMSHRGKTSSPIE.

The protein belongs to the protein kinase superfamily. CAMK Ser/Thr protein kinase family.

The enzyme catalyses L-seryl-[protein] + ATP = O-phospho-L-seryl-[protein] + ADP + H(+). It catalyses the reaction L-threonyl-[protein] + ATP = O-phospho-L-threonyl-[protein] + ADP + H(+). This chain is Probable serine/threonine-protein kinase DDB_G0277165, found in Dictyostelium discoideum (Social amoeba).